A 280-amino-acid polypeptide reads, in one-letter code: NAD(+) hydrolase TirS (280 aa).

Residues 22–94 (MNKLPDEIDR…KINLQKEQSR (73 aa)) are a coiled coil. A TIR domain is found at 141–275 (IEYDVFLSHS…EIVEKIYQVI (135 aa)). NAD(+)-binding positions include 150–151 (SS) and glutamate 180. Glutamate 216 is an active-site residue.

Its subcellular location is the secreted. The enzyme catalyses NAD(+) + H2O = ADP-D-ribose + nicotinamide + H(+). It carries out the reaction NADP(+) + H2O = ADP-D-ribose 2'-phosphate + nicotinamide + H(+). Functionally, virulence factor that suppresses host Toll-like receptor 2 (TLR2)-mediated NF-kappa-B signaling upon infection. NAD(+) hydrolase (NADase) that catalyzes cleavage of NAD(+) into ADP-D-ribose (ADPR) and nicotinamide. Also able to hydrolyze NADP(+), but not other NAD(+)-related molecules. Able to reduce NAD(+) levels in host cells. The protein is NAD(+) hydrolase TirS of Staphylococcus aureus (strain MSSA476).